A 954-amino-acid polypeptide reads, in one-letter code: Glycine dehydrogenase (decarboxylating) (954 aa).

An N6-(pyridoxal phosphate)lysine modification is found at Lys-704.

The protein belongs to the GcvP family. In terms of assembly, the glycine cleavage system is composed of four proteins: P, T, L and H. The cofactor is pyridoxal 5'-phosphate.

The catalysed reaction is N(6)-[(R)-lipoyl]-L-lysyl-[glycine-cleavage complex H protein] + glycine + H(+) = N(6)-[(R)-S(8)-aminomethyldihydrolipoyl]-L-lysyl-[glycine-cleavage complex H protein] + CO2. The glycine cleavage system catalyzes the degradation of glycine. The P protein binds the alpha-amino group of glycine through its pyridoxal phosphate cofactor; CO(2) is released and the remaining methylamine moiety is then transferred to the lipoamide cofactor of the H protein. In Vibrio vulnificus (strain YJ016), this protein is Glycine dehydrogenase (decarboxylating).